The sequence spans 178 residues: Enhancer of split m5 protein (178 aa).

Positions 18–73 (YLKVKKPLLERQRRARMNKCLDTLKTLVAEFQGDDAILRMDKAEMLEAALVFMRKQ) constitute a bHLH domain. One can recognise an Orange domain in the interval 89-122 (FKNGYMNAVSEISRVMACTPAMSVDVGKTVMTHL). Positions 135 to 165 (VQTSVTTSTPRPLSPASSGYHSDNEDSQSAA) are enriched in polar residues. Residues 135–178 (VQTSVTTSTPRPLSPASSGYHSDNEDSQSAASPKPVEETMWRPW) form a disordered region. A compositionally biased stretch (basic and acidic residues) spans 169–178 (PVEETMWRPW). Residues 175-178 (WRPW) carry the WRPW motif motif.

In terms of assembly, transcription repression requires formation of a complex with a corepressor protein (Groucho). Forms homodimers.

The protein localises to the nucleus. In terms of biological role, participates in the control of cell fate choice by uncommitted neuroectodermal cells in the embryo. Transcriptional repressor. Binds DNA on N-box motifs: 5'-CACNAG-3'. The protein is Enhancer of split m5 protein of Drosophila melanogaster (Fruit fly).